Consider the following 365-residue polypeptide: tRNA(Met) cytidine acetate ligase (365 aa).

ATP contacts are provided by residues 7–20, glycine 96, asparagine 152, and arginine 175; that span reads IAEF…HKYL.

Belongs to the TmcAL family.

It localises to the cytoplasm. It catalyses the reaction cytidine(34) in elongator tRNA(Met) + acetate + ATP = N(4)-acetylcytidine(34) in elongator tRNA(Met) + AMP + diphosphate. Functionally, catalyzes the formation of N(4)-acetylcytidine (ac(4)C) at the wobble position of elongator tRNA(Met), using acetate and ATP as substrates. First activates an acetate ion to form acetyladenylate (Ac-AMP) and then transfers the acetyl group to tRNA to form ac(4)C34. The sequence is that of tRNA(Met) cytidine acetate ligase from Streptococcus pneumoniae (strain JJA).